Reading from the N-terminus, the 268-residue chain is Ribosomal RNA small subunit methyltransferase A (268 aa).

S-adenosyl-L-methionine is bound by residues Asn-16, Leu-18, Gly-43, Glu-64, Asp-89, and Asn-110.

This sequence belongs to the class I-like SAM-binding methyltransferase superfamily. rRNA adenine N(6)-methyltransferase family. RsmA subfamily.

The protein resides in the cytoplasm. It catalyses the reaction adenosine(1518)/adenosine(1519) in 16S rRNA + 4 S-adenosyl-L-methionine = N(6)-dimethyladenosine(1518)/N(6)-dimethyladenosine(1519) in 16S rRNA + 4 S-adenosyl-L-homocysteine + 4 H(+). In terms of biological role, specifically dimethylates two adjacent adenosines (A1518 and A1519) in the loop of a conserved hairpin near the 3'-end of 16S rRNA in the 30S particle. May play a critical role in biogenesis of 30S subunits. The sequence is that of Ribosomal RNA small subunit methyltransferase A from Pseudomonas aeruginosa (strain ATCC 15692 / DSM 22644 / CIP 104116 / JCM 14847 / LMG 12228 / 1C / PRS 101 / PAO1).